A 197-amino-acid chain; its full sequence is Dephospho-CoA kinase (197 aa).

The DPCK domain occupies 3–197; sequence ILGLTGSIAM…TGCLVGQGSR (195 aa). 11-16 is a binding site for ATP; that stretch reads AMGKST.

The protein belongs to the CoaE family.

It localises to the cytoplasm. The catalysed reaction is 3'-dephospho-CoA + ATP = ADP + CoA + H(+). It functions in the pathway cofactor biosynthesis; coenzyme A biosynthesis; CoA from (R)-pantothenate: step 5/5. In terms of biological role, catalyzes the phosphorylation of the 3'-hydroxyl group of dephosphocoenzyme A to form coenzyme A. This chain is Dephospho-CoA kinase, found in Zymomonas mobilis subsp. mobilis (strain ATCC 31821 / ZM4 / CP4).